Here is a 235-residue protein sequence, read N- to C-terminus: MNSNANKTPIAIGISQIFPCSYLEDQQEQLLVIQEETLDPILFERLLAIGFRRSGSAIYKPRCPRCSACQPIRLPVREFIPSKRQKRTLANNRDLTWRITSSQTDEQYTLYERYIRQRHFDGPMFPPSKEQYEQFLFCHWLPPTFIEVYANNKLIAVAVTDTLPNSLSAIYSYFDPDEAHRSLGVLLILIQCRLAKLQRKEFLYLGYQIDANRKMSYKRLYRPYQILTPQGWEYS.

The protein belongs to the R-transferase family. Bpt subfamily.

The protein localises to the cytoplasm. It carries out the reaction N-terminal L-glutamyl-[protein] + L-leucyl-tRNA(Leu) = N-terminal L-leucyl-L-glutamyl-[protein] + tRNA(Leu) + H(+). The catalysed reaction is N-terminal L-aspartyl-[protein] + L-leucyl-tRNA(Leu) = N-terminal L-leucyl-L-aspartyl-[protein] + tRNA(Leu) + H(+). In terms of biological role, functions in the N-end rule pathway of protein degradation where it conjugates Leu from its aminoacyl-tRNA to the N-termini of proteins containing an N-terminal aspartate or glutamate. In Shewanella putrefaciens (strain CN-32 / ATCC BAA-453), this protein is Aspartate/glutamate leucyltransferase.